Here is a 332-residue protein sequence, read N- to C-terminus: Acetyl-coenzyme A carboxylase carboxyl transferase subunit beta (332 aa).

One can recognise a CoA carboxyltransferase N-terminal domain in the interval 24–293; sequence LWIKCPDSGH…PEVIVESEPE (270 aa). The segment at 288–332 is disordered; it reads VESEPEPEPEPVVAEIIPPTSDLPVSAPAPAPVAAQTPAPAAPSA. Residues 298–332 show a composition bias toward low complexity; that stretch reads PVVAEIIPPTSDLPVSAPAPAPVAAQTPAPAAPSA.

It belongs to the AccD/PCCB family. In terms of assembly, acetyl-CoA carboxylase is a heterohexamer composed of biotin carboxyl carrier protein (AccB), biotin carboxylase (AccC) and two subunits each of ACCase subunit alpha (AccA) and ACCase subunit beta (AccD).

It is found in the cytoplasm. It carries out the reaction N(6)-carboxybiotinyl-L-lysyl-[protein] + acetyl-CoA = N(6)-biotinyl-L-lysyl-[protein] + malonyl-CoA. The protein operates within lipid metabolism; malonyl-CoA biosynthesis; malonyl-CoA from acetyl-CoA: step 1/1. Its function is as follows. Component of the acetyl coenzyme A carboxylase (ACC) complex. Biotin carboxylase (BC) catalyzes the carboxylation of biotin on its carrier protein (BCCP) and then the CO(2) group is transferred by the transcarboxylase to acetyl-CoA to form malonyl-CoA. This chain is Acetyl-coenzyme A carboxylase carboxyl transferase subunit beta, found in Rhodopseudomonas palustris (strain BisB18).